Here is a 286-residue protein sequence, read N- to C-terminus: Probable aquaporin PIP-type pTOM75 (286 aa).

A disordered region spans residues 1 to 35 (MAENKEEDVKLGANKFRETQPLGTAAQTDKDYKEP). Topologically, residues 1-55 (MAENKEEDVKLGANKFRETQPLGTAAQTDKDYKEPPPAPLFEPGELSSWSFYRAG) are cytoplasmic. The segment covering 7 to 18 (EDVKLGANKFRE) has biased composition (basic and acidic residues). The chain crosses the membrane as a helical span at residues 56 to 76 (IAEFMATFLFLYITILTVMGL). Over 77–89 (KRSDSLCSSVGIQ) the chain is Extracellular. A helical transmembrane segment spans residues 90–110 (GVAWAFGGMIFALVYCTAGIS). Topologically, residues 111–133 (GGHINPAVTFGLFLARKLSLTRA) are cytoplasmic. Positions 115-117 (NPA) match the NPA 1 motif. A helical transmembrane segment spans residues 134-154 (VFYMVMQCLGAICGAGVVKGF). The Extracellular segment spans residues 155–175 (MVGPYQRLGGGANVVNPGYTK). A helical membrane pass occupies residues 176–196 (GDGLGAEIIGTFVLVYTVFSA). Over 197-209 (TDAKRNARDSHVP) the chain is Cytoplasmic. The helical transmembrane segment at 210–230 (ILAPLPIGFAVFLVHLATIPI) threads the bilayer. At 231–257 (TGTGINPARSLGAAIIYNDEHAWNDHW) the chain is on the extracellular side. An NPA 2 motif is present at residues 236 to 238 (NPA). Residues 258–278 (IFWVGPMIGAALAAIYHQIII) traverse the membrane as a helical segment. The Cytoplasmic segment spans residues 279 to 286 (RAMPFHRS).

Belongs to the MIP/aquaporin (TC 1.A.8) family. PIP (TC 1.A.8.11) subfamily. Roots, ripening fruit and senescing leaves.

The protein localises to the cell membrane. Its function is as follows. Aquaporins facilitate the transport of water and small neutral solutes across cell membranes. This is Probable aquaporin PIP-type pTOM75 from Solanum lycopersicum (Tomato).